The following is a 510-amino-acid chain: Propionyl-CoA carboxylase beta chain (510 aa).

Residues 1–257 (MKDILQELEN…SNRTPAPVRP (257 aa)) enclose the CoA carboxyltransferase N-terminal domain. The carboxyltransferase stretch occupies residues 1–504 (MKDILQELEN…NKKLANPWKK (504 aa)). One can recognise a CoA carboxyltransferase C-terminal domain in the interval 264–504 (RIEDSLDTLI…NKKLANPWKK (241 aa)).

Belongs to the AccD/PCCB family. As to quaternary structure, probably a dodecamer composed of six biotin-containing alpha subunits and six beta subunits.

It catalyses the reaction propanoyl-CoA + hydrogencarbonate + ATP = (S)-methylmalonyl-CoA + ADP + phosphate + H(+). It participates in metabolic intermediate metabolism; propanoyl-CoA degradation; succinyl-CoA from propanoyl-CoA: step 1/3. In Cereibacter sphaeroides (strain ATCC 17023 / DSM 158 / JCM 6121 / CCUG 31486 / LMG 2827 / NBRC 12203 / NCIMB 8253 / ATH 2.4.1.) (Rhodobacter sphaeroides), this protein is Propionyl-CoA carboxylase beta chain.